The primary structure comprises 284 residues: Pantothenate synthetase (284 aa).

Position 30 to 37 (30 to 37) interacts with ATP; it reads MGNLHEGH. The active-site Proton donor is the histidine 37. Glutamine 61 contacts (R)-pantoate. Glutamine 61 contacts beta-alanine. 149–152 provides a ligand contact to ATP; sequence GEKD. Glutamine 155 is a (R)-pantoate binding site. Residues valine 178 and 186 to 189 contribute to the ATP site; that span reads LSSR.

It belongs to the pantothenate synthetase family. Homodimer.

The protein resides in the cytoplasm. It carries out the reaction (R)-pantoate + beta-alanine + ATP = (R)-pantothenate + AMP + diphosphate + H(+). It participates in cofactor biosynthesis; (R)-pantothenate biosynthesis; (R)-pantothenate from (R)-pantoate and beta-alanine: step 1/1. Its function is as follows. Catalyzes the condensation of pantoate with beta-alanine in an ATP-dependent reaction via a pantoyl-adenylate intermediate. In Yersinia pseudotuberculosis serotype O:1b (strain IP 31758), this protein is Pantothenate synthetase.